Reading from the N-terminus, the 1104-residue chain is Nitrite reductase [NAD(P)H] (1104 aa).

Q44–E79 is a binding site for FAD. Y146–T176 contacts NAD(+). Positions K396 to P419 are disordered. Positions 500, 502, 535, and 538 each coordinate [2Fe-2S] cluster. [4Fe-4S] cluster-binding residues include C720, C726, C760, and C764. C764 serves as a coordination point for siroheme. The 109-residue stretch at W932–Y1040 folds into the Rieske domain. Residues C976, H978, C1001, and H1004 each coordinate [2Fe-2S] cluster. The tract at residues G1081–W1104 is disordered. The segment covering P1094–W1104 has biased composition (polar residues).

Belongs to the nitrite and sulfite reductase 4Fe-4S domain family. As to quaternary structure, homodimer. The cofactor is siroheme. Requires [4Fe-4S] cluster as cofactor. It depends on FAD as a cofactor. [2Fe-2S] cluster is required as a cofactor.

It catalyses the reaction NH4(+) + 3 NADP(+) + 2 H2O = nitrite + 3 NADPH + 5 H(+). It carries out the reaction NH4(+) + 3 NAD(+) + 2 H2O = nitrite + 3 NADH + 5 H(+). It participates in nitrogen metabolism; nitrate reduction (assimilation). This chain is Nitrite reductase [NAD(P)H] (niiA), found in Emericella nidulans (strain FGSC A4 / ATCC 38163 / CBS 112.46 / NRRL 194 / M139) (Aspergillus nidulans).